A 341-amino-acid polypeptide reads, in one-letter code: MKALSKLKAEEGIWMTDVPLPALGHNDIMIKIRKAAICGTDVHIYNWDTWSQKTIPVPMVVGHEYVGEVVAVGQEVRGFRIGDRVSGEGHITCGHCRNCRAGRTHLCRNTIGVGVNRQGAFAEYLVIPAFNAFKIPDNIPDALAAIFDPFGNAVHTALSFDLVGEDVLVSGAGPIGIMAAAVCRHVGARHVVITDVNDYRLDLARKMGVTRAVNVSRESLPEVMQALGMSEGFDVGLEMSGAPPAFHTMLDTMNHGGKIAMLGIPPGDMAIDWNQVIFKGLLIKGIYGREMFETWYKMAALIQSGLDLTPIITHQYAIDDFQKGFDVMRSGHSGKVILNWS.

Cys38 serves as a coordination point for Zn(2+). Residues Thr40 and His43 each act as charge relay system in the active site. 6 residues coordinate Zn(2+): His63, Glu64, Cys93, Cys96, Cys99, and Cys107. NAD(+)-binding positions include Ile175, Asp195, Arg200, 262–264, and 286–287; these read LGI and IY.

Belongs to the zinc-containing alcohol dehydrogenase family. Homotetramer. It depends on Zn(2+) as a cofactor.

Its subcellular location is the cytoplasm. The catalysed reaction is L-threonine + NAD(+) = (2S)-2-amino-3-oxobutanoate + NADH + H(+). It functions in the pathway amino-acid degradation; L-threonine degradation via oxydo-reductase pathway; glycine from L-threonine: step 1/2. Catalyzes the NAD(+)-dependent oxidation of L-threonine to 2-amino-3-ketobutyrate. The polypeptide is L-threonine 3-dehydrogenase (Edwardsiella ictaluri (strain 93-146)).